The following is a 229-amino-acid chain: Potassium/proton antiporter CemA (229 aa).

Helical transmembrane passes span 6–26, 107–127, and 189–209; these read AFIP…ISLC, ILHF…SFWG, and ILSG…KYWI.

The protein belongs to the CemA family.

Its subcellular location is the plastid. The protein resides in the chloroplast inner membrane. It catalyses the reaction K(+)(in) + H(+)(out) = K(+)(out) + H(+)(in). Functionally, contributes to K(+)/H(+) antiport activity by supporting proton efflux to control proton extrusion and homeostasis in chloroplasts in a light-dependent manner to modulate photosynthesis. Prevents excessive induction of non-photochemical quenching (NPQ) under continuous-light conditions. Indirectly promotes efficient inorganic carbon uptake into chloroplasts. The polypeptide is Potassium/proton antiporter CemA (Arabidopsis thaliana (Mouse-ear cress)).